A 331-amino-acid chain; its full sequence is Protoheme IX farnesyltransferase (331 aa).

The next 8 helical transmembrane spans lie at 63–83 (LACTLGGGALAAAAAGALNCL), 109–129 (SVFIGAVACTLVSSALLVSGV), 132–152 (LAAGLTLLGLCSYVLLYTAFL), 160–180 (IVFGGVAGAIPPLVGASAAAG), 188–208 (WLFSLVMVWTPAHFWALAILL), 215–235 (VGIPMLPTVSGPFVTAKAISV), 241–261 (VFLSFLGCFVLPEGGLLYGIL), and 294–314 (ILYMFGVCFLLVISRLQVSIV).

It belongs to the UbiA prenyltransferase family. Protoheme IX farnesyltransferase subfamily.

The protein localises to the cell inner membrane. It catalyses the reaction heme b + (2E,6E)-farnesyl diphosphate + H2O = Fe(II)-heme o + diphosphate. It participates in porphyrin-containing compound metabolism; heme O biosynthesis; heme O from protoheme: step 1/1. Its function is as follows. Converts heme B (protoheme IX) to heme O by substitution of the vinyl group on carbon 2 of heme B porphyrin ring with a hydroxyethyl farnesyl side group. This chain is Protoheme IX farnesyltransferase, found in Prochlorococcus marinus (strain NATL1A).